Here is a 348-residue protein sequence, read N- to C-terminus: GTPase Obg (348 aa).

An Obg domain is found at methionine 1–isoleucine 159. Residues alanine 160–aspartate 327 form the OBG-type G domain. Residues glycine 166 to serine 173, phenylalanine 191 to histidine 195, aspartate 212 to glycine 215, asparagine 279 to aspartate 282, and serine 308 to valine 310 each bind GTP. The Mg(2+) site is built by serine 173 and threonine 193.

Belongs to the TRAFAC class OBG-HflX-like GTPase superfamily. OBG GTPase family. Monomer. Mg(2+) serves as cofactor.

Its subcellular location is the cytoplasm. An essential GTPase which binds GTP, GDP and possibly (p)ppGpp with moderate affinity, with high nucleotide exchange rates and a fairly low GTP hydrolysis rate. Plays a role in control of the cell cycle, stress response, ribosome biogenesis and in those bacteria that undergo differentiation, in morphogenesis control. The sequence is that of GTPase Obg from Ruegeria sp. (strain TM1040) (Silicibacter sp.).